A 91-amino-acid chain; its full sequence is uncharacterized protein (91 aa).

This is an uncharacterized protein from Homo sapiens (Human).